The sequence spans 295 residues: Trimeric intracellular cation channel type A (295 aa).

The Lumenal portion of the chain corresponds to 1–18 (MEVLDVLNLGEIAQYFSK). A helical transmembrane segment spans residues 19–37 (MAMFPVFDVAYYIVSILYL). At 38-51 (KYEPGAVEVSRRSP) the chain is on the cytoplasmic side. Residues 52 to 75 (VASWLCAMLYCFGSYILADIMLGV) form a helical membrane-spanning segment. Ca(2+) is bound at residue glycine 74. At 76–86 (CPIDYFHNNSH) the chain is on the lumenal side. Residues 87–106 (ILLASAVWYLIFFCPLNLFY) form a helical membrane-spanning segment. Residues 107–144 (KCVAFMPVKLVLVALKEVVRTRKIAAGVHHAHHAYHHG) lie on the Cytoplasmic side of the membrane. Positions 122 and 126 each coordinate a 1,2-diacyl-sn-glycero-3-phospho-(1D-myo-inositol-4,5-bisphosphate). Residues 145–162 (WLIMVITGYVKGSGVALM) traverse the membrane as a helical segment. The Lumenal segment spans residues 163-182 (SNFEQLLRGVWKPETNEVLN). Residues 183 to 199 (MSFPTKASLYGAILFTL) traverse the membrane as a helical segment. Residues 200–210 (QEAHVLPVSKS) lie on the Cytoplasmic side of the membrane. The helical transmembrane segment at 211–227 (TLICLFTLFMVSSKVFM) threads the bilayer. Residues 228–236 (TARHSHGSP) are Lumenal-facing. The helical transmembrane segment at 237-255 (FALIESWVCHVLFGSPLGT) threads the bilayer. The Cytoplasmic portion of the chain corresponds to 256–295 (EDAHDHHHAAPAAAPAPLSPAKNKEELSEGTRKRKSKKAE). A disordered region spans residues 259–295 (HDHHHAAPAAAPAPLSPAKNKEELSEGTRKRKSKKAE). Residues 265 to 276 (APAAAPAPLSPA) are compositionally biased toward low complexity. Over residues 277-286 (KNKEELSEGT) the composition is skewed to basic and acidic residues.

Belongs to the TMEM38 family. Homotrimer; conformation seems to be controled by binding to diacylglycerol (DAG).

It localises to the sarcoplasmic reticulum membrane. The protein resides in the nucleus membrane. The enzyme catalyses K(+)(in) = K(+)(out). Channel activity is activated by a change of voltage within the sarcoplasmic reticulum lumen and blocked by luminal high Ca(2+) levels. Functionally, intracellular monovalent cation channel required for maintenance of rapid intracellular calcium release. Acts as a potassium counter-ion channel that functions in synchronization with calcium release from intracellular stores. Opened by a change of voltage within the sarcoplasmic reticulum lumen. In Danio rerio (Zebrafish), this protein is Trimeric intracellular cation channel type A (tmem38a).